Reading from the N-terminus, the 587-residue chain is MAYDATKMADWQISEEAEKNMPMPEEWCEKLGLEKEEMLAMGRLSKLDFLKIIKRLEAKPDGKYIEVTAITPTPLGEGKSTTSLGLMEGLGARGKSVGGALRQPSGGPTMNVKGTAAGGGNSLLIPMTEFSLGLTGDINDIMNAHNLGMVAMTARMQHERNYNDEQLQRLTGMRRLDIDPTRVEMGWIIDFCAQALRNIVIGLGGRTDGYTMQSKFGIAVGSELMAILAVATDLADLKERINNITVAFDKSGKPVTCRDLEVGNAMAAFMRNTINPTLMSTAEYQPCLVHAGPFANIAVGQSSIIADRVGLKLWDYHVTESGFAADIGFEKFWNVKCRFSGLKPHVSVLTATIRALKMHGGGPKVVAGKALDDAYTKENLALVEKGVENMVHMIGVIRKSGINPVVCVNRFYTDTDAEVAIVKKAAEAAGARCAESKHWEKGGEGALEFADAVIDACEEGNDFDFLYPLEMKLRDRVDKIAREVYGADGVDWSPEATAKAEMLENDPKYADFATMMVKTHLSLTHDPVKKGVPKGWRLPIRDVLIYSGAKFLCPCAGTISLMPGTGSNPAFRRIDVDPATGKVSGLF.

73–80 (TPLGEGKS) contacts ATP.

It belongs to the formate--tetrahydrofolate ligase family.

The enzyme catalyses (6S)-5,6,7,8-tetrahydrofolate + formate + ATP = (6R)-10-formyltetrahydrofolate + ADP + phosphate. It participates in one-carbon metabolism; tetrahydrofolate interconversion. The chain is Formate--tetrahydrofolate ligase from Desulfosudis oleivorans (strain DSM 6200 / JCM 39069 / Hxd3) (Desulfococcus oleovorans).